The sequence spans 261 residues: MTHQTHAYHMVNPSPWPLTGALSALLMTSGLVMWFHYNSTLLLTLGLTTNLLTMYQWWRDIIRESTFQGHHTPAVQKGLRYGMILFIISEVFFFSGFFWAFYHSSLAPTPELGGCWPPTGIHPLNPMEVPLLNTSVLLASGVSITWAHHSLMEGNRKHMLQALFITISLGIYFTLLQASEYYEAPFTISDGVYGSTFFVATGFHGLHVIIGSTFLIVCFLRQLKFHFTSNHHFGFEAAAWYWHFVDVVWLFLYVSIYWWGS.

Residues M1–P15 lie on the Mitochondrial matrix side of the membrane. A helical membrane pass occupies residues W16–W34. At F35–T40 the chain is on the mitochondrial intermembrane side. The chain crosses the membrane as a helical span at residues L41–T66. Residues F67–T72 lie on the Mitochondrial matrix side of the membrane. Residues P73–S105 form a helical membrane-spanning segment. Residues L106–E128 are Mitochondrial intermembrane-facing. The helical transmembrane segment at V129–M152 threads the bilayer. Residues E153–N155 lie on the Mitochondrial matrix side of the membrane. Residues R156–E183 form a helical membrane-spanning segment. Over A184–D190 the chain is Mitochondrial intermembrane. A helical membrane pass occupies residues G191–L223. Topologically, residues K224–H232 are mitochondrial matrix. The chain crosses the membrane as a helical span at residues F233–I256. The Mitochondrial intermembrane portion of the chain corresponds to Y257–S261.

Belongs to the cytochrome c oxidase subunit 3 family. As to quaternary structure, component of the cytochrome c oxidase (complex IV, CIV), a multisubunit enzyme composed of 14 subunits. The complex is composed of a catalytic core of 3 subunits MT-CO1, MT-CO2 and MT-CO3, encoded in the mitochondrial DNA, and 11 supernumerary subunits COX4I, COX5A, COX5B, COX6A, COX6B, COX6C, COX7A, COX7B, COX7C, COX8 and NDUFA4, which are encoded in the nuclear genome. The complex exists as a monomer or a dimer and forms supercomplexes (SCs) in the inner mitochondrial membrane with NADH-ubiquinone oxidoreductase (complex I, CI) and ubiquinol-cytochrome c oxidoreductase (cytochrome b-c1 complex, complex III, CIII), resulting in different assemblies (supercomplex SCI(1)III(2)IV(1) and megacomplex MCI(2)III(2)IV(2)).

It is found in the mitochondrion inner membrane. The enzyme catalyses 4 Fe(II)-[cytochrome c] + O2 + 8 H(+)(in) = 4 Fe(III)-[cytochrome c] + 2 H2O + 4 H(+)(out). Functionally, component of the cytochrome c oxidase, the last enzyme in the mitochondrial electron transport chain which drives oxidative phosphorylation. The respiratory chain contains 3 multisubunit complexes succinate dehydrogenase (complex II, CII), ubiquinol-cytochrome c oxidoreductase (cytochrome b-c1 complex, complex III, CIII) and cytochrome c oxidase (complex IV, CIV), that cooperate to transfer electrons derived from NADH and succinate to molecular oxygen, creating an electrochemical gradient over the inner membrane that drives transmembrane transport and the ATP synthase. Cytochrome c oxidase is the component of the respiratory chain that catalyzes the reduction of oxygen to water. Electrons originating from reduced cytochrome c in the intermembrane space (IMS) are transferred via the dinuclear copper A center (CU(A)) of subunit 2 and heme A of subunit 1 to the active site in subunit 1, a binuclear center (BNC) formed by heme A3 and copper B (CU(B)). The BNC reduces molecular oxygen to 2 water molecules using 4 electrons from cytochrome c in the IMS and 4 protons from the mitochondrial matrix. The sequence is that of Cytochrome c oxidase subunit 3 (MT-CO3) from Rhinoceros unicornis (Greater Indian rhinoceros).